The sequence spans 79 residues: Cytochrome b (79 aa).

Helical transmembrane passes span 1–7 (TAMFLAM), 31–52 (WLIR…YLHI), and 67–79 (WNVG…LTMM). Heme b-binding residues include histidine 37 and histidine 51.

The protein belongs to the cytochrome b family. The cytochrome bc1 complex contains 3 respiratory subunits (MT-CYB, CYC1 and UQCRFS1), 2 core proteins (UQCRC1 and UQCRC2) and probably 6 low-molecular weight proteins. Requires heme b as cofactor.

Its subcellular location is the mitochondrion inner membrane. Functionally, component of the ubiquinol-cytochrome c reductase complex (complex III or cytochrome b-c1 complex) that is part of the mitochondrial respiratory chain. The b-c1 complex mediates electron transfer from ubiquinol to cytochrome c. Contributes to the generation of a proton gradient across the mitochondrial membrane that is then used for ATP synthesis. This chain is Cytochrome b (mt-cyb), found in Hypsophrys nicaraguensis (Moga).